A 212-amino-acid chain; its full sequence is MATCRRRRRGCNSQARRSRHESDPFVRRARAEGWRSRAALKLEAIDQRDGLFRPGQVVVDLGAAPGGWSQLVAPKVGSAGRVVAIDLLEMDPLPGVTFLHADFSTDEGLRAVERALEGRPVDIVLSDMAPNLTGHNAVDQPAAMGLAELAADFAGQFLHKNGDFLVKVFHGEGFDAFRGDLTRRFSRVLSRKPDASRSGSREVYLLARGPTV.

A compositionally biased stretch (basic residues) spans 1–10 (MATCRRRRRG). A disordered region spans residues 1–24 (MATCRRRRRGCNSQARRSRHESDP). S-adenosyl-L-methionine is bound by residues glycine 66, tryptophan 68, aspartate 86, aspartate 102, and aspartate 127. Lysine 167 functions as the Proton acceptor in the catalytic mechanism.

This sequence belongs to the class I-like SAM-binding methyltransferase superfamily. RNA methyltransferase RlmE family.

The protein resides in the cytoplasm. The catalysed reaction is uridine(2552) in 23S rRNA + S-adenosyl-L-methionine = 2'-O-methyluridine(2552) in 23S rRNA + S-adenosyl-L-homocysteine + H(+). Specifically methylates the uridine in position 2552 of 23S rRNA at the 2'-O position of the ribose in the fully assembled 50S ribosomal subunit. The polypeptide is Ribosomal RNA large subunit methyltransferase E (Halorhodospira halophila (strain DSM 244 / SL1) (Ectothiorhodospira halophila (strain DSM 244 / SL1))).